Here is a 611-residue protein sequence, read N- to C-terminus: Elongation factor 4 (611 aa).

The region spanning 12–193 is the tr-type G domain; that stretch reads AVIRNFCIIA…TIVAKVPAPE (182 aa). Residues 24-29 and 140-143 contribute to the GTP site; these read DHGKST and NKID.

It belongs to the TRAFAC class translation factor GTPase superfamily. Classic translation factor GTPase family. LepA subfamily.

It localises to the cell membrane. The enzyme catalyses GTP + H2O = GDP + phosphate + H(+). In terms of biological role, required for accurate and efficient protein synthesis under certain stress conditions. May act as a fidelity factor of the translation reaction, by catalyzing a one-codon backward translocation of tRNAs on improperly translocated ribosomes. Back-translocation proceeds from a post-translocation (POST) complex to a pre-translocation (PRE) complex, thus giving elongation factor G a second chance to translocate the tRNAs correctly. Binds to ribosomes in a GTP-dependent manner. The polypeptide is Elongation factor 4 (Cutibacterium acnes (strain DSM 16379 / KPA171202) (Propionibacterium acnes)).